We begin with the raw amino-acid sequence, 243 residues long: Carboxy-S-adenosyl-L-methionine synthase (243 aa).

S-adenosyl-L-methionine contacts are provided by residues tyrosine 40, 65–67 (GCS), 90–91 (DN), 118–119 (DI), asparagine 133, and arginine 200.

It belongs to the class I-like SAM-binding methyltransferase superfamily. Cx-SAM synthase family. In terms of assembly, homodimer.

The enzyme catalyses prephenate + S-adenosyl-L-methionine = carboxy-S-adenosyl-L-methionine + 3-phenylpyruvate + H2O. Its function is as follows. Catalyzes the conversion of S-adenosyl-L-methionine (SAM) to carboxy-S-adenosyl-L-methionine (Cx-SAM). In Shewanella putrefaciens (strain CN-32 / ATCC BAA-453), this protein is Carboxy-S-adenosyl-L-methionine synthase.